Here is a 160-residue protein sequence, read N- to C-terminus: Fimbrial protein (160 aa).

The propeptide at Met1–Gly7 is leader sequence. An N-methylphenylalanine modification is found at Phe8. Residues Phe8–Ile28 traverse the membrane as a helical segment.

The protein belongs to the N-Me-Phe pilin family. In terms of assembly, the pili are polar flexible filaments of about 5.4 nanometers diameter and 2.5 micrometers average length; they consist of only a single polypeptide chain arranged in a helical configuration of five subunits per turn in the assembled pilus.

The protein localises to the fimbrium. It localises to the membrane. In Dichelobacter nodosus (Bacteroides nodosus), this protein is Fimbrial protein (fimA).